The sequence spans 469 residues: UDP-N-acetylmuramate--L-alanine ligase (469 aa).

112-118 (GTHGKTT) contributes to the ATP binding site.

The protein belongs to the MurCDEF family.

It is found in the cytoplasm. It catalyses the reaction UDP-N-acetyl-alpha-D-muramate + L-alanine + ATP = UDP-N-acetyl-alpha-D-muramoyl-L-alanine + ADP + phosphate + H(+). The protein operates within cell wall biogenesis; peptidoglycan biosynthesis. In terms of biological role, cell wall formation. The sequence is that of UDP-N-acetylmuramate--L-alanine ligase from Laribacter hongkongensis (strain HLHK9).